The sequence spans 101 residues: MAKVSSIKKNEKRKKLSQSLHNKREKLKNKIYDKNISLEERFSLVMSLAQLSRNSSATRIRNRCELTGRPRGVIRKFGISRNKLRELSGRGLVPGIIKSSW.

The tract at residues 1–24 (MAKVSSIKKNEKRKKLSQSLHNKR) is disordered. Over residues 10-24 (NEKRKKLSQSLHNKR) the composition is skewed to basic residues.

The protein belongs to the universal ribosomal protein uS14 family. Part of the 30S ribosomal subunit. Contacts proteins S3 and S10.

In terms of biological role, binds 16S rRNA, required for the assembly of 30S particles and may also be responsible for determining the conformation of the 16S rRNA at the A site. The chain is Small ribosomal subunit protein uS14 from Rickettsia bellii (strain OSU 85-389).